The chain runs to 885 residues: Insulin receptor substrate 1-A (885 aa).

Residues 1–56 (MNIRRCGHSENFFFIEVGRSAVTGAGEFWMQVDDSVVAQNMHETILEAMKALSDEF) form the IRS-type PTB domain. A disordered region spans residues 56-225 (FRPRSKSQSS…GGFISSDEYG (170 aa)). Low complexity-rich tracts occupy residues 61-75 (KSQS…ISVP), 99-109 (SATATSPAGGA), 176-197 (SPSA…GSTS), and 205-217 (SSAS…SDGG). A Phosphoserine modification is found at Ser104. The residue at position 257 (Tyr257) is a Phosphotyrosine; by INSR. Residues 257 to 260 (YICM) carry the YXXM motif 1 motif. Composition is skewed to polar residues over residues 263–276 (SSSH…QRYQ) and 296–313 (SSGT…PSQS). Disordered stretches follow at residues 263-282 (SSSH…RGEE) and 293-313 (RTHS…PSQS). 5 consecutive short sequence motifs (YXXM motif) follow at residues 318 to 321 (YTEM), 364 to 367 (YMPM), 381 to 384 (YMPM), 409 to 412 (YMMM), and 451 to 454 (YINM). 2 positions are modified to phosphotyrosine; by INSR: Tyr364 and Tyr381. At Tyr409 the chain carries Phosphotyrosine. The disordered stretch occupies residues 501 to 581 (NLRISANSGH…LPPEPKSPGE (81 aa)). A compositionally biased stretch (polar residues) spans 504 to 515 (ISANSGHNLYTE). Over residues 516–526 (DSSSSSTSSDS) the composition is skewed to low complexity. Residues Tyr582 and Tyr620 each carry the phosphotyrosine; by INSR modification. Residues 582-584 (YVN) are GRB2-binding. The short motif at 620–623 (YMNM) is the YXXM motif 7 element. Positions 637-660 (TSSYEPPNKPVNSVCPTETCSSSR) are enriched in polar residues. Positions 637 to 665 (TSSYEPPNKPVNSVCPTETCSSSRPPIRG) are disordered. The residue at position 672 (Tyr672) is a Phosphotyrosine; by INSR. 2 short sequence motifs (YXXM motif) span residues 672–675 (YMSM) and 706–709 (YAEM). A disordered region spans residues 732 to 803 (ASRSSLLGQG…SGEDVKRHSS (72 aa)). Composition is skewed to polar residues over residues 743 to 758 (GPSA…NRNP) and 777 to 792 (ETFS…TTGP). Residues Tyr834 and Tyr866 each carry the phosphotyrosine; by INSR modification.

As to quaternary structure, interacts with the NPXY motif of tyrosine-phosphorylated igf1r and insr via the PTB domain. Binds to phosphatidylinositol 3-kinase p85 subunit at a low level in vitro prior to phosphorylation. Binding is greatly enhanced following tyrosine phosphorylation by insr and probably occurs via the phosphorylated YXXM motifs. Post-translationally, phosphorylation of Tyr-582 is required for grb2-binding.

Its function is as follows. May mediate the control of various cellular processes by insulin. When phosphorylated by the insulin receptor binds specifically to various cellular proteins containing SH2 domains such as phosphatidylinositol 3-kinase p85 subunit or grb2. Activates phosphatidylinositol 3-kinase when bound to the regulatory p85 subunit. This chain is Insulin receptor substrate 1-A (irs1-a), found in Xenopus laevis (African clawed frog).